Consider the following 260-residue polypeptide: Malonyl-[acyl-carrier protein] O-methyltransferase (260 aa).

The protein belongs to the methyltransferase superfamily.

The catalysed reaction is malonyl-[ACP] + S-adenosyl-L-methionine = malonyl-[ACP] methyl ester + S-adenosyl-L-homocysteine. The protein operates within cofactor biosynthesis; biotin biosynthesis. Functionally, converts the free carboxyl group of a malonyl-thioester to its methyl ester by transfer of a methyl group from S-adenosyl-L-methionine (SAM). It allows to synthesize pimeloyl-ACP via the fatty acid synthetic pathway. This chain is Malonyl-[acyl-carrier protein] O-methyltransferase, found in Haemophilus influenzae (strain ATCC 51907 / DSM 11121 / KW20 / Rd).